The following is an 89-amino-acid chain: Small ribosomal subunit protein uS15 (89 aa).

It belongs to the universal ribosomal protein uS15 family. Part of the 30S ribosomal subunit. Forms a bridge to the 50S subunit in the 70S ribosome, contacting the 23S rRNA.

One of the primary rRNA binding proteins, it binds directly to 16S rRNA where it helps nucleate assembly of the platform of the 30S subunit by binding and bridging several RNA helices of the 16S rRNA. Its function is as follows. Forms an intersubunit bridge (bridge B4) with the 23S rRNA of the 50S subunit in the ribosome. The protein is Small ribosomal subunit protein uS15 of Chelativorans sp. (strain BNC1).